The chain runs to 685 residues: UvrABC system protein C (685 aa).

In terms of domain architecture, GIY-YIG spans 15–93 (ALPGVYRYFD…IKTQNPRFNI (79 aa)). Residues 214–249 (QELLQAMEARMMAYSGQLAFEQAAEVRNQMQALSRV) form the UVR domain. Residues 365–388 (AQGGDHAPAAQGGDPPPAASSGGH) are compositionally biased toward low complexity. The interval 365 to 391 (AQGGDHAPAAQGGDPPPAASSGGHPLR) is disordered.

It belongs to the UvrC family. In terms of assembly, interacts with UvrB in an incision complex.

The protein resides in the cytoplasm. The UvrABC repair system catalyzes the recognition and processing of DNA lesions. UvrC both incises the 5' and 3' sides of the lesion. The N-terminal half is responsible for the 3' incision and the C-terminal half is responsible for the 5' incision. The chain is UvrABC system protein C from Verminephrobacter eiseniae (strain EF01-2).